A 945-amino-acid polypeptide reads, in one-letter code: Soluble guanylate cyclase gcy-33 (945 aa).

Heme is bound at residue histidine 104. Positions 388 to 413 (SEVLTEMTREISEAKKTARTLLTQMM) form a coiled coil. Positions 437–567 (SIGFIRVCDF…DTVNTASRME (131 aa)) constitute a Guanylate cyclase domain. 2 disordered regions span residues 639-679 (KEAE…LSGS) and 706-930 (QDEN…KCED). Residues 661-679 (SLGESIDSSSSRRGSLSGS) are compositionally biased toward low complexity. Residues 711–720 (RPPTWSASHS) are compositionally biased toward polar residues. Residues 721–731 (QDIRKPRKTES) show a composition bias toward basic and acidic residues. Residues 732–744 (KITLNSRLSSSDL) show a composition bias toward polar residues. 2 stretches are compositionally biased toward basic and acidic residues: residues 750 to 759 (ETSKDSDGET) and 766 to 804 (ELKE…DHVS). The stretch at 763-802 (TSSELKEVNRIREEALAQEKEEERTTKEENQKIEEVGEDH) forms a coiled coil. Residues 817-828 (GDNNISFSQMPS) are compositionally biased toward polar residues. Basic and acidic residues predominate over residues 851–861 (ISKKKLEKEDS). A compositionally biased stretch (polar residues) spans 862–884 (NSSMSSLDERTTVSAKPTTTRRL). Basic and acidic residues predominate over residues 886-896 (NQKDLEKEKKR). A compositionally biased stretch (low complexity) spans 898 to 911 (SMAGSSVTSSSAHS). Basic and acidic residues predominate over residues 916 to 930 (SKKDTRDKSRCKCED).

The protein belongs to the adenylyl cyclase class-4/guanylyl cyclase family. Heterodimer; with other soluble guanylate cyclases. Heme is required as a cofactor. As to expression, expressed in BAG sensory neuron.

The protein localises to the cytoplasm. The catalysed reaction is GTP = 3',5'-cyclic GMP + diphosphate. Its activity is regulated as follows. May be regulated by molecular oxygen. Probably not activated by nitric oxide (NO). Functionally, synthesizes cyclic GMP (cGMP) from GTP. May be involved in sensitivity to quinine by regulating egl-4 activity through the production of cGMP. The chain is Soluble guanylate cyclase gcy-33 (gcy-33) from Caenorhabditis elegans.